Consider the following 432-residue polypeptide: Adenylosuccinate synthetase (432 aa).

Residues G13–K19 and G41–T43 contribute to the GTP site. Catalysis depends on D14, which acts as the Proton acceptor. D14 and G41 together coordinate Mg(2+). IMP contacts are provided by residues D14–K17, N39–H42, T130, R144, Q225, T240, and R304. The Proton donor role is filled by H42. A300 to R306 lines the substrate pocket. Residues R306, K332–D334, and S415–G417 each bind GTP.

Belongs to the adenylosuccinate synthetase family. In terms of assembly, homodimer. The cofactor is Mg(2+).

The protein localises to the cytoplasm. It catalyses the reaction IMP + L-aspartate + GTP = N(6)-(1,2-dicarboxyethyl)-AMP + GDP + phosphate + 2 H(+). Its pathway is purine metabolism; AMP biosynthesis via de novo pathway; AMP from IMP: step 1/2. Plays an important role in the de novo pathway of purine nucleotide biosynthesis. Catalyzes the first committed step in the biosynthesis of AMP from IMP. The polypeptide is Adenylosuccinate synthetase (Actinobacillus pleuropneumoniae serotype 7 (strain AP76)).